Reading from the N-terminus, the 459-residue chain is UDP-N-acetylmuramoylalanine--D-glutamate ligase (459 aa).

Gly119–Thr125 lines the ATP pocket.

It belongs to the MurCDEF family.

Its subcellular location is the cytoplasm. The enzyme catalyses UDP-N-acetyl-alpha-D-muramoyl-L-alanine + D-glutamate + ATP = UDP-N-acetyl-alpha-D-muramoyl-L-alanyl-D-glutamate + ADP + phosphate + H(+). Its pathway is cell wall biogenesis; peptidoglycan biosynthesis. In terms of biological role, cell wall formation. Catalyzes the addition of glutamate to the nucleotide precursor UDP-N-acetylmuramoyl-L-alanine (UMA). This Lacticaseibacillus casei (strain BL23) (Lactobacillus casei) protein is UDP-N-acetylmuramoylalanine--D-glutamate ligase.